Consider the following 646-residue polypeptide: Beta-mannosyltransferase 6 (646 aa).

The Cytoplasmic portion of the chain corresponds to 1-25 (MGNYKPSIKQYVVTVKAIKSSQFGR). The chain crosses the membrane as a helical span at residues 26–46 (LGICAVVLLFVLGYPFYFISN). Residues 47 to 646 (NPFDTSIRYQ…LTGGWLPSHN (600 aa)) are Extracellular-facing. Residues Asn-62, Asn-81, Asn-103, Asn-117, Asn-127, Asn-132, Asn-146, Asn-334, and Asn-393 are each glycosylated (N-linked (GlcNAc...) asparagine).

This sequence belongs to the BMT family.

It is found in the membrane. In terms of biological role, beta-mannosyltransferase involved in cell wall biosynthesis. Required for beta-1,2-mannose transfer on phospholipomannan. Required for pro-inflammatory response in macrophages through phospholipomannan-induced TNF-alpha production. This chain is Beta-mannosyltransferase 6 (BMT6), found in Candida albicans (strain SC5314 / ATCC MYA-2876) (Yeast).